The following is a 75-amino-acid chain: Kappa-thalatoxin-Tas2a (75 aa).

Positions 1–22 are cleaved as a signal peptide; the sequence is MKFQMIAAVLLIAFCLSVVVTA. Residues 23–40 constitute a propeptide that is removed on maturation; that stretch reads RMELQDDEEMKNGSFQKR. The region spanning 43 to 75 is the ShKT domain; the sequence is CIDTIPKSRCTAFQCKHSMKYRLSFCRKTCGTC. Disulfide bonds link cysteine 43-cysteine 75, cysteine 52-cysteine 68, and cysteine 57-cysteine 72.

The protein belongs to the sea anemone type 1 potassium channel toxin family. Type 1a subfamily.

Its subcellular location is the secreted. It localises to the nematocyst. Inhibits voltage-gated potassium channels (Kv) with higher potency for Kv1.1/KCNA1 and Kv1.3/KCNA3 (IC(50)=3.4 nM). In Thalassianthus aster (Fuzzy-tipped anemone), this protein is Kappa-thalatoxin-Tas2a.